We begin with the raw amino-acid sequence, 1167 residues long: Integrin alpha-10 (1167 aa).

An N-terminal signal peptide occupies residues 1–22; it reads MELPFVTHLFLPLVFLTGLCSP. The Extracellular portion of the chain corresponds to 23 to 1122; it reads FNLDEHHPRL…VVQTRPILIS (1100 aa). 2 FG-GAP repeats span residues 24–85 and 95–154; these read NLDE…HNAP and QLGN…PQGS. An intrachain disulfide couples C76 to C86. Residues N98, N234, N336, and N364 are each glycosylated (N-linked (GlcNAc...) asparagine). The 184-residue stretch at 167 to 350 folds into the VWFA domain; it reads DVVIVLDGSN…AALTDIVDAL (184 aa). FG-GAP repeat units follow at residues 361 to 412, 417 to 470, 472 to 534, 535 to 593, and 597 to 657; these read HAEN…LFPP, EDEF…KDGA, RVAQ…SLLT, LQGT…GVRP, and QRIA…VTPQ. Residues D494, D496, D498, D502, D558, N560, D562, D566, D620, D622, D624, and D628 each contribute to the Ca(2+) site. 2 disulfide bridges follow: C666–C675 and C681–C736. N-linked (GlcNAc...) asparagine glycosylation is found at N733 and N763. Cysteines 789 and 795 form a disulfide. N-linked (GlcNAc...) asparagine glycosylation is found at N839, N921, N1011, N1018, and N1039. A helical transmembrane segment spans residues 1123–1145; sequence LWILIGSVLGGLLLLALLVFCLW. The Cytoplasmic segment spans residues 1146 to 1167; sequence KLGFFAHKKIPEEEKREEKLEQ.

This sequence belongs to the integrin alpha chain family. In terms of assembly, heterodimer of an alpha and a beta subunit. Alpha-10 associates with beta-1. As to expression, widely expressed with highest expression in muscle and heart. Found in articular cartilage.

It is found in the membrane. Functionally, integrin alpha-10/beta-1 is a receptor for collagen. The protein is Integrin alpha-10 (ITGA10) of Homo sapiens (Human).